The following is a 203-amino-acid chain: Cell division protein SepF (203 aa).

Disordered regions lie at residues 26 to 51 (DGELEQVQPAYQEEPPRRSAPERRGQ) and 167 to 203 (GTASGSQEGDLLARTARRSEEGDRTGADRSKFDWRNQ). 2 stretches are compositionally biased toward basic and acidic residues: residues 39–50 (EPPRRSAPERRG) and 183–203 (RRSEEGDRTGADRSKFDWRNQ).

Belongs to the SepF family. As to quaternary structure, homodimer. Interacts with FtsZ.

The protein localises to the cytoplasm. Functionally, cell division protein that is part of the divisome complex and is recruited early to the Z-ring. Probably stimulates Z-ring formation, perhaps through the cross-linking of FtsZ protofilaments. Its function overlaps with FtsA. The protein is Cell division protein SepF of Symbiobacterium thermophilum (strain DSM 24528 / JCM 14929 / IAM 14863 / T).